The chain runs to 303 residues: Kanosamine kinase (303 aa).

It belongs to the ROK (NagC/XylR) family.

The catalysed reaction is kanosamine + ATP = D-kanosamine 6-phosphate + ADP + H(+). It participates in antibiotic biosynthesis; rifamycin B biosynthesis. Its activity is regulated as follows. Inhibited by Zn(2+), Cu(2+), and Fe(2+). Functionally, involved in the biosynthesis of 3-amino-5-hydroxybenzoate (AHBA), a compound that then serves as the starter unit for the assembly of a polyketide during the biosynthesis of rifamycin B and other ansamycin antibiotics. Catalyzes only the phosphorylation of kanosamine to yield kanosamine 6-phosphate. The chain is Kanosamine kinase (rifN) from Amycolatopsis mediterranei (strain S699) (Nocardia mediterranei).